We begin with the raw amino-acid sequence, 231 residues long: DNA mismatch repair protein MutH (231 aa).

The protein belongs to the MutH family.

Its subcellular location is the cytoplasm. Its function is as follows. Sequence-specific endonuclease that cleaves unmethylated GATC sequences. It is involved in DNA mismatch repair. The protein is DNA mismatch repair protein MutH of Salmonella typhi.